A 485-amino-acid polypeptide reads, in one-letter code: MSEYPKKRKRKTLHPSRYSDSSGISRIADGVSGIFSDHCYSVCSMRQPDLKYFDNKDDDSDPETANDLPKFTDGTKARSRSQSCLVPSPVLRILEHTVFSTEKPADVEICDEECGSPESGHQHTHEESPIEVHTSEDVPIAVEVHAISEDYDIEAENNSSESLLDQTDEEPPAKLCKILDKSQASNVTAQQKWPLLRANSSGLYKCELCEFNSKYFSDLKQHVILKHKRTDSNVCRVCKESFSTNMLLIEHAKLHEEDPYICKYCDYKTVIFENLSQHIADTHFSDHLYWCEQCDVQFSSSSELYLHFQEHSRDEQYLCQFCEHETGDPEDLHSHVVNEHARRLIELSDKCGSGGHGQCSLLSKITFDKCKNFFVCQVCGFRSRLHTNVNRHVAIEHTKIFPHVCDDCGKGFSSMLEYCKHLNSHLSEGIYLCQYCEYSTGQIEDLKIHLDFKHSADLPHKCSDCLMRFGNERELISHLPVHETT.

Basic residues predominate over residues methionine 1 to histidine 14. Disordered stretches follow at residues methionine 1–glycine 23 and aspartate 54–glutamine 82. Position 60 is a phosphoserine (serine 60). Lysine 76 is covalently cross-linked (Glycyl lysine isopeptide (Lys-Gly) (interchain with G-Cter in SUMO2)). Residue serine 88 is modified to Phosphoserine. Glycyl lysine isopeptide (Lys-Gly) (interchain with G-Cter in SUMO2) cross-links involve residues lysine 177, lysine 181, and lysine 226. 8 C2H2-type zinc fingers span residues tyrosine 204–histidine 227, asparagine 233–histidine 255, tyrosine 260–histidine 283, tyrosine 289–histidine 311, phenylalanine 374–histidine 397, histidine 403–histidine 425, tyrosine 431–histidine 454, and histidine 460–histidine 482. The tract at residues lysine 371–serine 455 is interaction with CTNNA2.

This sequence belongs to the krueppel C2H2-type zinc-finger protein family. As to quaternary structure, interacts with CTNNA2.

It localises to the nucleus. Its function is as follows. Binds DNA and may function as a transcriptional repressor. The chain is Zinc finger protein 639 (Znf639) from Rattus norvegicus (Rat).